The primary structure comprises 1862 residues: Ankyrin-1 (1862 aa).

The 89 kDa domain stretch occupies residues 1 to 827 (MGFCKADAAT…DELVGSKAER (827 aa)). ANK repeat units follow at residues 40–69 (NGLN…ILET), 73–102 (KGNT…NVNA), 106–135 (KGFT…NQNV), 139–168 (DGFT…KGKV), 170–197 (LPAL…NPDV), 201–230 (TGFT…SVNF), 234–263 (NGIT…QIET), 267–296 (DELT…PIQA), 300–329 (NGLS…EIDD), 333–362 (DHLT…KPNS), 366–395 (NGFT…SIDA), 399–428 (SGLT…SPNV), 432–461 (KVET…KANA), 465–494 (DDQT…SPNL), 498–527 (AGHT…SQAC), 531–560 (KGFT…HPNA), 564–593 (NGLT…SPHS), 597–626 (NGYT…SANA), 630–659 (QGVT…NGNL), 663–692 (SGLT…TVDA), 696–725 (MGYT…DVNA), 729–758 (LGYS…SPNE), and 762–791 (NGTT…ETSV). Lys55 bears the Phosphoserine mark. At Asn101 the chain carries (3S)-3-hydroxyasparagine; by HIF1AN; partial. Residue Asn229 is modified to (3S)-3-hydroxyasparagine; by HIF1AN. Ser425 bears the Phosphoserine mark. (3S)-3-hydroxyasparagine; by HIF1AN is present on residues Asn427 and Asn460. (3S)-3-hydroxyasparagine; by HIF1AN is present on residues Asn625 and Asn658. Asp691 is modified ((3S)-3-hydroxyaspartate; by HIF1AN). Asn724 is subject to (3S)-3-hydroxyasparagine; by HIF1AN. Residue Ser755 is modified to Phosphoserine. Residue Asn757 is modified to (3S)-3-hydroxyasparagine; by HIF1AN. Phosphoserine is present on residues Ser777, Ser813, Ser830, and Ser852. Positions 812 to 834 (VSEDEGDELVGSKAERRDSRDVG) are disordered. Positions 824-834 (KAERRDSRDVG) are enriched in basic and acidic residues. Thr862 bears the Phosphothreonine mark. Positions 872 to 900 (DQEQASKEYDEDSLIPSSPATETSDNISP) are disordered. Residues 886–900 (IPSSPATETSDNISP) are compositionally biased toward polar residues. 2 consecutive ZU5 domains span residues 909-1064 (FLVS…IMSR) and 1066-1212 (CQDY…LSDC). The residue at position 957 (Thr957) is a Phosphothreonine. Tyr1069 carries the post-translational modification Phosphotyrosine. The residue at position 1078 (Ser1078) is a Phosphoserine. The interval 1197 to 1331 (ANFTTNVSAR…PVKVRDSSRE (135 aa)) is UPA domain. Phosphothreonine is present on residues Thr1374 and Thr1376. Phosphoserine is present on residues Ser1386 and Ser1388. Residues 1387-1862 (ESRLGFTSDT…KRASLKRGKQ (476 aa)) form a 55 kDa regulatory domain region. Thr1396 is modified (phosphothreonine). A Death domain is found at 1399 to 1483 (VEMRMAVIRE…EIVNMLEGSG (85 aa)). Ser1424, Ser1473, and Ser1482 each carry phosphoserine. The segment at 1481 to 1506 (GSGRQSRNLKPERRHGDREYSLSPSQ) is disordered. Basic and acidic residues predominate over residues 1489–1500 (LKPERRHGDREY). Phosphoserine is present on residues Ser1519, Ser1529, and Ser1612. 2 disordered regions span residues 1598 to 1720 (EGAH…GPHS) and 1744 to 1767 (VSTR…KEPS). Residues 1637–1647 (EGQRSEKKRQE) are compositionally biased toward basic and acidic residues. Residues 1648–1666 (VSGTEQDTETEVSLVSGQQ) show a composition bias toward polar residues. Residues Ser1660, Ser1675, and Ser1685 each carry the phosphoserine modification. Over residues 1681–1694 (VLDRSQARTLDWDK) the composition is skewed to basic and acidic residues. Over residues 1695 to 1720 (QGSTAVHPQEATQSSWQEEVTQGPHS) the composition is skewed to polar residues.

As to quaternary structure, component of the ankyrin-1 complex in the erythrocyte, composed of ANK1, RHCE, RHAG, SLC4A1, EPB42, GYPA, GYPB and AQP1. Interacts with a number of integral membrane proteins and cytoskeletal proteins. Interacts (via N-terminus) with SPTB/spectrin (beta chain). Also interacts with TTN/titin. Isoform Mu17 interacts with OBSCN isoform 3/obscurin. Interacts with HIF1AN. Interacts (via ANK 1-5 repeats) with RHCE; this interaction mediates the primary membrane attachment site for ANK1. Interacts (via ANK 1-2 repeats) with AQP1 (via the N-terminal). Interacts (via ANK 1-13 repeats) with EPB42. Interacts directly with SLC4A1 (via the cytoplasmic domain); this interaction is mediated by the SLC4A1 Band 3-II and Band 3-III dimers. Regulated by phosphorylation. In terms of processing, acylated by palmitic acid group(s). Post-translationally, hydroxylated by HIF1AN at several asparagine and 1 aspartate residue within ANK repeat region; hydroxylation seems to increase the conformational stability of this region and may also modulate protein-protein interactions mediated by the ANK repeat region.

The protein resides in the cytoplasm. It is found in the cytoskeleton. Its subcellular location is the membrane. It localises to the sarcoplasmic reticulum. In terms of biological role, component of the ankyrin-1 complex, a multiprotein complex involved in the stability and shape of the erythrocyte membrane. Attaches integral membrane proteins to cytoskeletal elements; binds to the erythrocyte membrane protein band 4.2, to Na-K ATPase, to the lymphocyte membrane protein GP85, and to the cytoskeletal proteins fodrin, tubulin, vimentin and desmin. Erythrocyte ankyrins also link spectrin (beta chain) to the cytoplasmic domain of the erythrocytes anion exchange protein; they retain most or all of these binding functions. In Mus musculus (Mouse), this protein is Ankyrin-1.